Here is a 202-residue protein sequence, read N- to C-terminus: Probable cytochrome c oxidase subunit 3 (202 aa).

The next 5 membrane-spanning stretches (helical) occupy residues 30–50 (VVWL…YFTA), 69–89 (AVPV…GVFS), 101–121 (WYVI…YEYY), 141–161 (LATG…IFLL), and 178–198 (IVVS…FTVI).

It belongs to the cytochrome c oxidase subunit 3 family.

Its subcellular location is the cell membrane. It catalyses the reaction 4 Fe(II)-[cytochrome c] + O2 + 8 H(+)(in) = 4 Fe(III)-[cytochrome c] + 2 H2O + 4 H(+)(out). In Mycobacterium leprae (strain TN), this protein is Probable cytochrome c oxidase subunit 3 (ctaE).